Consider the following 977-residue polypeptide: AP-2 complex subunit alpha-1 (977 aa).

A disordered region spans residues 614–702 (AKLKRKKGPG…PSLGPTPEEA (89 aa)). Phosphoserine is present on residues Ser626 and Ser652. Residues 646–657 (PTPSTVSTPSPS) are compositionally biased toward low complexity. At Thr653 the chain carries Phosphothreonine. Phosphoserine is present on Ser655. The span at 666 to 675 (APPPAAPPAP) shows a compositional bias: pro residues.

The protein belongs to the adaptor complexes large subunit family. Adaptor protein complex 2 (AP-2) is a heterotetramer composed of two large adaptins (alpha-type subunit AP2A1 or AP2A2 and beta-type subunit AP2B1), a medium adaptin (mu-type subunit AP2M1) and a small adaptin (sigma-type subunit AP2S1). Interacts with HIP1 and RAB11FIP2. Interacts with SLC12A5. Interacts with clathrin. Interacts with SGIP1. Interacts with RFTN1. Interacts with KIAA1107. Interacts with PICALM. Together with AP2B1 and AP2M1, it interacts with ADAM10; this interaction facilitates ADAM10 endocytosis from the plasma membrane during long-term potentiation in hippocampal neurons. Interacts with ABCB11; this interaction regulates cell membrane expression of ABCB11 through its internalization in a clathrin-dependent manner and its subsequent degradation. Probably interacts with ACE2 (via endocytic sorting signal motif); the interaction is inhibited by ACE2 phosphorylation. As to expression, expressed in the brain (at protein level). Isoform A: Expressed only in neuronal tissue and skeletal muscle. Isoform B: Widely expressed.

The protein localises to the cell membrane. It is found in the membrane. The protein resides in the coated pit. Component of the adaptor protein complex 2 (AP-2). Adaptor protein complexes function in protein transport via transport vesicles in different membrane traffic pathways. Adaptor protein complexes are vesicle coat components and appear to be involved in cargo selection and vesicle formation. AP-2 is involved in clathrin-dependent endocytosis in which cargo proteins are incorporated into vesicles surrounded by clathrin (clathrin-coated vesicles, CCVs) which are destined for fusion with the early endosome. The clathrin lattice serves as a mechanical scaffold but is itself unable to bind directly to membrane components. Clathrin-associated adaptor protein (AP) complexes which can bind directly to both the clathrin lattice and to the lipid and protein components of membranes are considered to be the major clathrin adaptors contributing the CCV formation. AP-2 also serves as a cargo receptor to selectively sort the membrane proteins involved in receptor-mediated endocytosis. AP-2 seems to play a role in the recycling of synaptic vesicle membranes from the presynaptic surface. AP-2 recognizes Y-X-X-[FILMV] (Y-X-X-Phi) and [ED]-X-X-X-L-[LI] endocytosis signal motifs within the cytosolic tails of transmembrane cargo molecules. AP-2 may also play a role in maintaining normal post-endocytic trafficking through the ARF6-regulated, non-clathrin pathway. The AP-2 alpha subunit binds polyphosphoinositide-containing lipids, positioning AP-2 on the membrane. During long-term potentiation in hippocampal neurons, AP-2 is responsible for the endocytosis of ADAM10. The AP-2 alpha subunit acts via its C-terminal appendage domain as a scaffolding platform for endocytic accessory proteins. The AP-2 alpha and AP-2 sigma subunits are thought to contribute to the recognition of the [ED]-X-X-X-L-[LI] motif. The protein is AP-2 complex subunit alpha-1 (Ap2a1) of Mus musculus (Mouse).